We begin with the raw amino-acid sequence, 252 residues long: tRNA1(Val) (adenine(37)-N6)-methyltransferase (252 aa).

It belongs to the methyltransferase superfamily. tRNA (adenine-N(6)-)-methyltransferase family.

It is found in the cytoplasm. It catalyses the reaction adenosine(37) in tRNA1(Val) + S-adenosyl-L-methionine = N(6)-methyladenosine(37) in tRNA1(Val) + S-adenosyl-L-homocysteine + H(+). Functionally, specifically methylates the adenine in position 37 of tRNA(1)(Val) (anticodon cmo5UAC). The chain is tRNA1(Val) (adenine(37)-N6)-methyltransferase from Yersinia pseudotuberculosis serotype O:3 (strain YPIII).